A 431-amino-acid chain; its full sequence is Glutamate--tRNA ligase 2 (431 aa).

The 'HIGH' region motif lies at 6-16 (PSPTGDMHIGN). The 'KMSKS' region motif lies at 235-239 (KMSKR). Lys-238 is an ATP binding site.

Belongs to the class-I aminoacyl-tRNA synthetase family. Glutamate--tRNA ligase type 1 subfamily. Monomer.

Its subcellular location is the cytoplasm. The catalysed reaction is tRNA(Glu) + L-glutamate + ATP = L-glutamyl-tRNA(Glu) + AMP + diphosphate. Its function is as follows. Catalyzes the attachment of glutamate to tRNA(Glu) in a two-step reaction: glutamate is first activated by ATP to form Glu-AMP and then transferred to the acceptor end of tRNA(Glu). In Campylobacter jejuni subsp. doylei (strain ATCC BAA-1458 / RM4099 / 269.97), this protein is Glutamate--tRNA ligase 2.